We begin with the raw amino-acid sequence, 394 residues long: Probable 6-phosphogluconolactonase ARB_02015 (394 aa).

An N-terminal signal peptide occupies residues methionine 1–alanine 21. Asparagine 51 is a glycosylation site (N-linked (GlcNAc...) asparagine).

It belongs to the cycloisomerase 2 family.

The protein resides in the secreted. The enzyme catalyses 6-phospho-D-glucono-1,5-lactone + H2O = 6-phospho-D-gluconate + H(+). It participates in carbohydrate degradation; pentose phosphate pathway; D-ribulose 5-phosphate from D-glucose 6-phosphate (oxidative stage): step 2/3. Functionally, catalyzes the hydrolysis of 6-phosphogluconolactone to 6-phosphogluconate. This is Probable 6-phosphogluconolactonase ARB_02015 from Arthroderma benhamiae (strain ATCC MYA-4681 / CBS 112371) (Trichophyton mentagrophytes).